The primary structure comprises 468 residues: Neurexin-1-beta (468 aa).

Positions 1 to 46 (MYQRMLRCGAELGSPGGGSSGGAGGRLALLWIVPLTLSGLLGVAWG) are cleaved as a signal peptide. The Extracellular segment spans residues 47 to 391 (ASSLGAHHIH…AEVIRESSST (345 aa)). In terms of domain architecture, Laminin G-like spans 87–285 (YIFSKGGGQI…DANIAIVGNV (199 aa)). 2 residues coordinate Ca(2+): D137 and V154. N-linked (GlcNAc...) asparagine glycosylation occurs at N184. The segment at 201–230 (GNNDNERLAIARQRIPYRLGRVVDEWLLDK) is essential for interaction with CBLN1; modulates interaction affinity with NLGN1, NLGN2 and NLGN3; prevents interaction with DAG1/alpha-dystroglycan; modulates interaction with alpha-latrotoxin. I236 and N238 together coordinate Ca(2+). Residue S346 is glycosylated (O-linked (Xyl...) (heparan sulfate) serine). Residues 350-381 (PSDDEDIDPCEPSSGGLANPTRVGGREPYPGS) form a disordered region. A helical transmembrane segment spans residues 392-414 (TGMVVGIVAAAALCILILLYAMY). Residues 415 to 468 (KYRNRDEGSYHVDESRNYISNSAQSNGAVVKEKQPSSAKSANKNKKNKDKEYYV) lie on the Cytoplasmic side of the membrane. Residues 435–468 (NSAQSNGAVVKEKQPSSAKSANKNKKNKDKEYYV) form a disordered region. 3 positions are modified to phosphoserine: S450, S451, and S454.

It belongs to the neurexin family. As to quaternary structure, the cytoplasmic C-terminal region binds to CASK. Binds NLGN1, NLGN2 and NLGN3, DAG1 (alpha-dystroglycan) and alpha-latrotoxin. Binding to neuroligins is calcium-dependent, and the binding preference ranks as follow: NLGN1 &gt; NLGN4 &gt;&gt; NLGN3 &gt; NLGN2. Interacts with CBLN2 and more weakly with CBLN4. Interacts with CBLN1; interaction is CBLN1 hexamer form-dependent; CBLN1-binding is calcium-independent; isoform 1b does not interact with CBLN1. Interacts with CLSTN3. Post-translationally, N-glycosylated. O-glycosylated; contains heparan sulfate. Heparan sulfate attachment is required for synapse development by mediating interactions with neuroligins. Brain.

The protein localises to the presynaptic cell membrane. Its function is as follows. Neuronal cell surface protein involved in cell recognition and cell adhesion by forming intracellular junctions through binding to neuroligins. Plays a role in formation of synaptic junctions. Functions as part of a trans-synaptic complex by binding to cerebellins and postsynaptic GRID1. This interaction helps regulate the activity of NMDA and AMPA receptors at hippocampal synapses without affecting synapse formation. NRXN1B-CBLN2-GRID1 complex transduce presynaptic signals into postsynaptic NMDAR response. The sequence is that of Neurexin-1-beta from Rattus norvegicus (Rat).